The following is a 503-amino-acid chain: uncharacterized protein (503 aa).

Helical transmembrane passes span Phe-20–Met-40, Leu-43–Leu-63, Val-106–Ala-126, Leu-138–Phe-158, Ala-166–Ile-186, Val-215–Ile-235, Leu-249–Ile-269, Tyr-301–Ser-321, Val-359–Leu-379, Leu-405–Leu-425, Gly-443–Trp-463, and Thr-468–Ser-488.

This sequence to M.genitalium MG225.

It is found in the cell membrane. This is an uncharacterized protein from Mycoplasma pneumoniae (strain ATCC 29342 / M129 / Subtype 1) (Mycoplasmoides pneumoniae).